Consider the following 449-residue polypeptide: Ktr system potassium uptake protein D (449 aa).

The next 10 helical transmembrane spans lie at leucine 17–alanine 37, threonine 46–valine 66, isoleucine 75–glycine 95, valine 133–leucine 153, phenylalanine 194–valine 214, isoleucine 235–glutamate 255, leucine 297–isoleucine 317, leucine 355–threonine 375, leucine 380–isoleucine 400, and valine 411–glycine 431.

It belongs to the TrkH potassium transport family. Ktr (TC 2.A.38.4) subfamily. Homodimer. Part of the KtrCD complex formed by an octameric catalytic ring of KtrC and a membrane associated dimer of KtrD forming a potassium channel.

It localises to the cell membrane. In terms of biological role, integral membrane subunit of the KtrCD potassium uptake transporter. The 2 major potassium transporter complexes KtrAB and KtrCD confer resistance to both suddenly imposed and prolonged osmotic stress. The protein is Ktr system potassium uptake protein D (ktrD) of Bacillus subtilis (strain 168).